We begin with the raw amino-acid sequence, 716 residues long: DNA ligase (716 aa).

NAD(+) contacts are provided by residues 49–53 (DAAYD), 98–99 (SL), and glutamate 132. Lysine 134 serves as the catalytic N6-AMP-lysine intermediate. NAD(+) is bound by residues arginine 155, glutamate 192, lysine 308, and lysine 332. Cysteine 437, cysteine 439, cysteine 461, and cysteine 467 together coordinate Zn(2+). In terms of domain architecture, BRCT spans 638-716 (KRNSPIATKT…EDEWLQLIGE (79 aa)).

This sequence belongs to the NAD-dependent DNA ligase family. LigA subfamily. It depends on Mg(2+) as a cofactor. Mn(2+) serves as cofactor.

The enzyme catalyses NAD(+) + (deoxyribonucleotide)n-3'-hydroxyl + 5'-phospho-(deoxyribonucleotide)m = (deoxyribonucleotide)n+m + AMP + beta-nicotinamide D-nucleotide.. Its function is as follows. DNA ligase that catalyzes the formation of phosphodiester linkages between 5'-phosphoryl and 3'-hydroxyl groups in double-stranded DNA using NAD as a coenzyme and as the energy source for the reaction. It is essential for DNA replication and repair of damaged DNA. This chain is DNA ligase, found in Bradyrhizobium sp. (strain ORS 278).